The sequence spans 1941 residues: Myosin-2 (1941 aa).

In terms of domain architecture, Myosin N-terminal SH3-like spans 33-82 (DAKTSVFVAEPKESFVKGTIQSREGGKVTVKTEGGATLTVKDDQVFPMNP). A phosphothreonine mark is found at Thr64 and Thr69. The Myosin motor domain occupies 86-784 (DKIEDMAMMT…LLGLLEEMRD (699 aa)). An N6,N6,N6-trimethyllysine modification is found at Lys130. 179–186 (GESGAGKT) contacts ATP. At Tyr389 the chain carries Phosphotyrosine. A Phosphoserine modification is found at Ser392. Thr419 bears the Phosphothreonine mark. Phosphoserine is present on Ser625. The tract at residues 661 to 683 (LNKLMTNLRSTHPHFVRCIIPNE) is actin-binding. His759 is modified (pros-methylhistidine). Residues 763 to 777 (KFGHTKVFFKAGLLG) form an actin-binding region. In terms of domain architecture, IQ spans 787-816 (LAQLITRTQARCRGFLARVEYQRMVERREA). Positions 845-1941 (LLKSAETEKE…EVHTKVISEE (1097 aa)) form a coiled coil. Ser1094 and Ser1098 each carry phosphoserine. Disordered regions lie at residues 1128–1149 (IEAE…SREL) and 1155–1174 (RLEE…KKRE). The span at 1130 to 1149 (AERASRAKAEKQRSDLSREL) shows a compositional bias: basic and acidic residues. Residues Ser1164 and Ser1239 each carry the phosphoserine modification. The residue at position 1243 (Thr1243) is a Phosphothreonine. At Ser1245 the chain carries Phosphoserine. Thr1257 is modified (phosphothreonine). Position 1263 is a phosphoserine (Ser1263). At Thr1288 the chain carries Phosphothreonine. Phosphoserine is present on residues Ser1290, Ser1294, Ser1305, and Ser1308. Thr1469 bears the Phosphothreonine mark. Phosphoserine is present on Ser1476. A Phosphotyrosine modification is found at Tyr1494. Ser1497 is modified (phosphoserine). Position 1503 is a phosphothreonine (Thr1503). Ser1516 is modified (phosphoserine). At Thr1519 the chain carries Phosphothreonine. Phosphoserine is present on residues Ser1556, Ser1576, Ser1602, Ser1605, Ser1716, and Ser1728. Phosphothreonine is present on residues Thr1732 and Thr1738. Ser1741 carries the post-translational modification Phosphoserine.

Belongs to the TRAFAC class myosin-kinesin ATPase superfamily. Myosin family. In terms of assembly, muscle myosin is a hexameric protein that consists of 2 heavy chain subunits (MHC), 2 alkali light chain subunits (MLC) and 2 regulatory light chain subunits (MLC-2). Interacts with GCSAM.

The protein resides in the cytoplasm. It localises to the myofibril. Its function is as follows. Myosins are actin-based motor molecules with ATPase activity essential for muscle contraction. The sequence is that of Myosin-2 from Homo sapiens (Human).